The chain runs to 91 residues: Large ribosomal subunit protein bL27 (91 aa).

The tract at residues Met-1 to Lys-24 is disordered.

Belongs to the bacterial ribosomal protein bL27 family.

In Chloroflexus aggregans (strain MD-66 / DSM 9485), this protein is Large ribosomal subunit protein bL27.